A 1130-amino-acid chain; its full sequence is Putative beta-hexosaminidase (1130 aa).

The signal sequence occupies residues 1 to 23 (MKWVKSGVGILGILLIICHAVTS). 2 stretches are compositionally biased toward low complexity: residues 1001–1030 (PGQM…LPAQ) and 1037–1072 (LTGQ…QRTG). Disordered stretches follow at residues 1001-1075 (PGQM…GVVP) and 1102-1130 (QMRG…QQAG).

The protein belongs to the glycosyl hydrolase 20 family. As to expression, prismatic layer of shell (at protein level). Expressed primarily in the mantle with highest level in the mantle edge and lower level in the mantle pallium.

It is found in the secreted. It carries out the reaction Hydrolysis of terminal non-reducing N-acetyl-D-hexosamine residues in N-acetyl-beta-D-hexosaminides.. It functions in the pathway glycan degradation; chitin degradation. This is Putative beta-hexosaminidase from Pinctada maxima (Silver-lipped pearl oyster).